Reading from the N-terminus, the 67-residue chain is Small ribosomal subunit protein eS17 (67 aa).

The protein belongs to the eukaryotic ribosomal protein eS17 family.

The polypeptide is Small ribosomal subunit protein eS17 (Pyrococcus abyssi (strain GE5 / Orsay)).